A 92-amino-acid polypeptide reads, in one-letter code: Small ribosomal subunit protein uS19 (92 aa).

Belongs to the universal ribosomal protein uS19 family.

Its function is as follows. Protein S19 forms a complex with S13 that binds strongly to the 16S ribosomal RNA. This chain is Small ribosomal subunit protein uS19, found in Gloeothece citriformis (strain PCC 7424) (Cyanothece sp. (strain PCC 7424)).